Consider the following 369-residue polypeptide: Protein-glutamate methylesterase/protein-glutamine glutaminase 1 (369 aa).

One can recognise a Response regulatory domain in the interval 11-128; the sequence is RVLIVDDSAA…DLERQEASIR (118 aa). Residue Asp62 is modified to 4-aspartylphosphate. The interval 136-168 is disordered; sequence ATETTRRRSQPEPRPLAPGPKLTADEILPARPP. The CheB-type methylesterase domain occupies 170–358; that stretch reads PVPETMPVVC…LDRLAARIME (189 aa). Active-site residues include Ser183, His209, and Asp305.

This sequence belongs to the CheB family. Post-translationally, phosphorylated by CheA. Phosphorylation of the N-terminal regulatory domain activates the methylesterase activity.

The protein localises to the cytoplasm. The enzyme catalyses [protein]-L-glutamate 5-O-methyl ester + H2O = L-glutamyl-[protein] + methanol + H(+). The catalysed reaction is L-glutaminyl-[protein] + H2O = L-glutamyl-[protein] + NH4(+). Involved in chemotaxis. Part of a chemotaxis signal transduction system that modulates chemotaxis in response to various stimuli. Catalyzes the demethylation of specific methylglutamate residues introduced into the chemoreceptors (methyl-accepting chemotaxis proteins or MCP) by CheR. Also mediates the irreversible deamidation of specific glutamine residues to glutamic acid. The chain is Protein-glutamate methylesterase/protein-glutamine glutaminase 1 from Cereibacter sphaeroides (strain ATCC 17023 / DSM 158 / JCM 6121 / CCUG 31486 / LMG 2827 / NBRC 12203 / NCIMB 8253 / ATH 2.4.1.) (Rhodobacter sphaeroides).